A 462-amino-acid polypeptide reads, in one-letter code: Flavin-containing monooxygenase FMO GS-OX3 (462 aa).

FAD is bound at residue 17 to 22 (GAGPAG). An NADP(+)-binding site is contributed by 212-217 (GNFASG). The helical transmembrane segment at 318–338 (ALAPGLAFVGLPAMGIVFVMF) threads the bilayer.

This sequence belongs to the FMO family.

The protein localises to the membrane. The enzyme catalyses a (Z)-omega-(methylsulfanyl)-N-sulfo-alkylhydroximate S-glucoside + NADPH + O2 + H(+) = a (Z)-omega-(methylsulfinyl)-alkyl-glucosinolate + NADP(+) + H2O. Functionally, catalyzes the conversion of methylthioalkyl glucosinolates of any chain length into methylsulfinylalkyl glucosinolates. Prefers probably short-chain methylthioalkyl glucosinolates in cv. Landsberg erecta. The sequence is that of Flavin-containing monooxygenase FMO GS-OX3 (FMOGS-OX3) from Arabidopsis thaliana (Mouse-ear cress).